Reading from the N-terminus, the 258-residue chain is Phosphoadenosine 5'-phosphosulfate reductase (258 aa).

The active-site Nucleophile; cysteine thiosulfonate intermediate is the Cys244.

Belongs to the PAPS reductase family. CysH subfamily.

The protein resides in the cytoplasm. It catalyses the reaction [thioredoxin]-disulfide + sulfite + adenosine 3',5'-bisphosphate + 2 H(+) = [thioredoxin]-dithiol + 3'-phosphoadenylyl sulfate. The protein operates within sulfur metabolism; hydrogen sulfide biosynthesis; sulfite from sulfate: step 3/3. Functionally, catalyzes the formation of sulfite from phosphoadenosine 5'-phosphosulfate (PAPS) using thioredoxin as an electron donor. The protein is Phosphoadenosine 5'-phosphosulfate reductase of Vibrio atlanticus (strain LGP32) (Vibrio splendidus (strain Mel32)).